Reading from the N-terminus, the 442-residue chain is Serine--tRNA ligase (442 aa).

249–251 contacts L-serine; the sequence is TSE. Residue 280 to 282 coordinates ATP; that stretch reads RSE. L-serine is bound at residue Glu303. 367 to 370 contacts ATP; the sequence is EISS. Ser402 contributes to the L-serine binding site.

This sequence belongs to the class-II aminoacyl-tRNA synthetase family. Type-1 seryl-tRNA synthetase subfamily. In terms of assembly, homodimer. The tRNA molecule binds across the dimer.

The protein resides in the cytoplasm. The catalysed reaction is tRNA(Ser) + L-serine + ATP = L-seryl-tRNA(Ser) + AMP + diphosphate + H(+). The enzyme catalyses tRNA(Sec) + L-serine + ATP = L-seryl-tRNA(Sec) + AMP + diphosphate + H(+). Its pathway is aminoacyl-tRNA biosynthesis; selenocysteinyl-tRNA(Sec) biosynthesis; L-seryl-tRNA(Sec) from L-serine and tRNA(Sec): step 1/1. In terms of biological role, catalyzes the attachment of serine to tRNA(Ser). Is also able to aminoacylate tRNA(Sec) with serine, to form the misacylated tRNA L-seryl-tRNA(Sec), which will be further converted into selenocysteinyl-tRNA(Sec). The protein is Serine--tRNA ligase of Acidovorax ebreus (strain TPSY) (Diaphorobacter sp. (strain TPSY)).